We begin with the raw amino-acid sequence, 337 residues long: Protein-arginine kinase (337 aa).

The region spanning 12–240 (IVIASKVKIL…NKLILREKNQ (229 aa)) is the Phosphagen kinase C-terminal domain. ATP is bound by residues 15–19 (ASKVK), 162–166 (RTKVF), and 193–198 (KSIYNS).

Belongs to the ATP:guanido phosphotransferase family.

It catalyses the reaction L-arginyl-[protein] + ATP = N(omega)-phospho-L-arginyl-[protein] + ADP + H(+). Catalyzes the specific phosphorylation of arginine residues in proteins. The protein is Protein-arginine kinase of Clostridium perfringens (strain 13 / Type A).